Consider the following 175-residue polypeptide: Protein OPG036 (175 aa).

Belongs to the poxviridae OPG036 family.

The protein localises to the host nucleus. Its function is as follows. Plays a role in the inhibition of host innate immune response. Within the host nucleus, inhibits activation of interferon-beta promoter by inhibiting IRF3 activation. The protein is Protein OPG036 (OPG036) of Homo sapiens (Human).